A 201-amino-acid polypeptide reads, in one-letter code: Recombination protein RecR (201 aa).

The C4-type zinc finger occupies 60-75 (CKRCGSYAETEICEIC). One can recognise a Toprim domain in the interval 83-178 (HTFCVVEQPE…NVTRIAYGIT (96 aa)).

It belongs to the RecR family.

May play a role in DNA repair. It seems to be involved in an RecBC-independent recombinational process of DNA repair. It may act with RecF and RecO. The polypeptide is Recombination protein RecR (Leptospira interrogans serogroup Icterohaemorrhagiae serovar copenhageni (strain Fiocruz L1-130)).